Here is a 621-residue protein sequence, read N- to C-terminus: 2-hydroxyacyl-CoA lyase 2 (621 aa).

A helical transmembrane segment spans residues 7 to 29 (LGCSLGAALGGVIFASYKLGLLY). Thiamine diphosphate is bound at residue Glu-87. The tract at residues 459–539 (DFVGSAAYIM…VIALVGNDAC (81 aa)) is thiamine pyrophosphate binding. Asp-510 and Asn-536 together coordinate Mg(2+).

This sequence belongs to the TPP enzyme family. The cofactor is Mg(2+). Thiamine diphosphate serves as cofactor.

Its subcellular location is the endoplasmic reticulum membrane. It carries out the reaction 2-hydroxyoctadecanoyl-CoA = heptadecanal + formyl-CoA. The catalysed reaction is (2R)-hydroxyhexadecanoyl-CoA = pentadecanal + formyl-CoA. Endoplasmic reticulum 2-OH acyl-CoA lyase involved in the cleavage (C1 removal) reaction in the fatty acid alpha-oxydation in a thiamine pyrophosphate (TPP)-dependent manner. The chain is 2-hydroxyacyl-CoA lyase 2 (ilvbl) from Danio rerio (Zebrafish).